Here is a 196-residue protein sequence, read N- to C-terminus: Putative NADH dehydrogenase/NAD(P)H nitroreductase PST_3601 (196 aa).

This sequence belongs to the nitroreductase family. HadB/RutE subfamily. It depends on FMN as a cofactor.

This is Putative NADH dehydrogenase/NAD(P)H nitroreductase PST_3601 from Stutzerimonas stutzeri (strain A1501) (Pseudomonas stutzeri).